Consider the following 132-residue polypeptide: MDVTRLLLATLLVFLCFFTAYSHLPPEEKLRDDRSLRSNSSVNLLDFPSVSIMALNKNSKEISRKEAEKKRSSKKEASMKKVARPRTPLSAPCVATRDSCKPPAPACCDPCASCQCRFFRSACSCRVLSLNC.

The N-terminal stretch at 1–22 (MDVTRLLLATLLVFLCFFTAYS) is a signal peptide. A glycan (N-linked (GlcNAc...) asparagine) is linked at Asn-39. Positions 61–79 (EISRKEAEKKRSSKKEASM) are enriched in basic and acidic residues. The segment at 61–87 (EISRKEAEKKRSSKKEASMKKVARPRT) is disordered. Cystine bridges form between Cys-93–Cys-108, Cys-100–Cys-114, Cys-107–Cys-125, Cys-111–Cys-132, and Cys-116–Cys-123. The region spanning 93–132 (CVATRDSCKPPAPACCDPCASCQCRFFRSACSCRVLSLNC) is the Agouti domain.

It is found in the secreted. Functionally, involved in the regulation of melanogenesis. The binding of ASP to MC1R precludes alpha-MSH initiated signaling and thus blocks production of cAMP, leading to a down-regulation of eumelanogenesis (brown/black pigment) and thus increasing synthesis of pheomelanin (yellow/red pigment). The polypeptide is Agouti-signaling protein (ASIP) (Macaca fascicularis (Crab-eating macaque)).